A 465-amino-acid polypeptide reads, in one-letter code: 3-isopropylmalate dehydratase large subunit (465 aa).

3 residues coordinate [4Fe-4S] cluster: C347, C407, and C410.

The protein belongs to the aconitase/IPM isomerase family. LeuC type 1 subfamily. In terms of assembly, heterodimer of LeuC and LeuD. Requires [4Fe-4S] cluster as cofactor.

The catalysed reaction is (2R,3S)-3-isopropylmalate = (2S)-2-isopropylmalate. It functions in the pathway amino-acid biosynthesis; L-leucine biosynthesis; L-leucine from 3-methyl-2-oxobutanoate: step 2/4. Functionally, catalyzes the isomerization between 2-isopropylmalate and 3-isopropylmalate, via the formation of 2-isopropylmaleate. This Aeromonas salmonicida (strain A449) protein is 3-isopropylmalate dehydratase large subunit.